We begin with the raw amino-acid sequence, 442 residues long: Serine hydroxymethyltransferase (442 aa).

Pyridoxal 5'-phosphate contacts are provided by residues Tyr-54, 100-102 (SGS), and His-236. A disulfide bridge connects residues Cys-125 and Cys-364. Lys-237 is modified (N6-(pyridoxal phosphate)lysine). Gly-272 contacts pyridoxal 5'-phosphate.

Belongs to the SHMT family. As to quaternary structure, homodimer. It depends on pyridoxal 5'-phosphate as a cofactor.

It localises to the cytoplasm. It is found in the mitochondrion matrix. The protein localises to the plastid. The protein resides in the apicoplast. Its subcellular location is the nucleus. It catalyses the reaction (6R)-5,10-methylene-5,6,7,8-tetrahydrofolate + glycine + H2O = (6S)-5,6,7,8-tetrahydrofolate + L-serine. Its pathway is one-carbon metabolism; tetrahydrofolate interconversion. Redox regulation; active in reducing conditions, inactive in oxidizing conditions. The reduction of the cysteine pairs allows the access binding of the tetrahydrofolate substrate to its binding site. This mechanism appears to be unique to Plasmodium species. Functionally, catalyzes the interconversion of serine to glycine accompanied with the production of 5,10-methylenetetrahydrofolate, a source of one-carbon units used by thymidylate synthase to convert dUMP to dTMP for DNA synthesis. Binds to its own mRNA and to the mRNA of bifunctional dihydrofolate reductase-thymidylate synthase (DHFR-TS) in vitro; the physiological relevance of this interaction is not clear. The sequence is that of Serine hydroxymethyltransferase from Plasmodium falciparum (isolate 3D7).